The sequence spans 82 residues: Acyl carrier protein (82 aa).

Residues S3–I77 form the Carrier domain. S37 is subject to O-(pantetheine 4'-phosphoryl)serine.

Belongs to the acyl carrier protein (ACP) family. 4'-phosphopantetheine is transferred from CoA to a specific serine of apo-ACP by AcpS. This modification is essential for activity because fatty acids are bound in thioester linkage to the sulfhydryl of the prosthetic group.

It is found in the plastid. It localises to the chloroplast. It participates in lipid metabolism; fatty acid biosynthesis. In terms of biological role, carrier of the growing fatty acid chain in fatty acid biosynthesis. This chain is Acyl carrier protein, found in Gracilaria tenuistipitata var. liui (Red alga).